We begin with the raw amino-acid sequence, 309 residues long: Glutaminase (309 aa).

Residues Ser64, Asn114, Glu160, Asn167, Tyr191, Tyr243, and Val261 each coordinate substrate.

Belongs to the glutaminase family. In terms of assembly, homotetramer.

It carries out the reaction L-glutamine + H2O = L-glutamate + NH4(+). In Methylorubrum extorquens (strain CM4 / NCIMB 13688) (Methylobacterium extorquens), this protein is Glutaminase.